We begin with the raw amino-acid sequence, 607 residues long: Large ribosomal subunit assembly factor BipA (607 aa).

The region spanning 3-198 (ENLRNIAIIA…AIVDHVPAPD (196 aa)) is the tr-type G domain. Residues 15–20 (DHGKTT) and 128–131 (NKVD) contribute to the GTP site. A C-terminal domain (CTD), required but not sufficient to bind 70S or 30S ribosomes region spans residues 481–607 (GQRQNGVLIS…RRANRGQKEE (127 aa)).

This sequence belongs to the TRAFAC class translation factor GTPase superfamily. Classic translation factor GTPase family. BipA subfamily. As to quaternary structure, monomer.

It is found in the cytoplasm. It catalyses the reaction GTP + H2O = GDP + phosphate + H(+). Its activity is regulated as follows. Ribosome-associated GTPase is not affected by low levels of ppGpp, &gt;40 uM ppGpp and &gt;50 uM GDP inhibit GTPase. The C-terminus (residues 387-607 or 481-607) inhibits GTPase activity, in its absence kcat increases, but GTPase is no longer stimulated by 70S ribosome or 30S or 50S subunits. In terms of biological role, a 50S ribosomal subunit assembly protein with GTPase activity, required for 50S subunit assembly at low temperatures, may also play a role in translation. Binds GTP and analogs. Binds the 70S ribosome between the 30S and 50S subunits, in a similar position as ribosome-bound EF-G; it contacts a number of ribosomal proteins, both rRNAs and the A-site tRNA. A ribosome-stimulated GTPase, GTPase activity increases 4 fold in the presence of 70S ribosomes. Binds 70S ribosomes in the presence of GTP or its non-hydrolyzable analog GMPPNP; in the presence of ppGpp or under stress conditions it binds to 30S ribosomal subunits. In Salmonella typhimurium (strain LT2 / SGSC1412 / ATCC 700720), this protein is Large ribosomal subunit assembly factor BipA.